A 154-amino-acid chain; its full sequence is 3-hydroxyacyl-[acyl-carrier-protein] dehydratase FabZ (154 aa).

Histidine 54 is an active-site residue.

It belongs to the thioester dehydratase family. FabZ subfamily.

Its subcellular location is the cytoplasm. It carries out the reaction a (3R)-hydroxyacyl-[ACP] = a (2E)-enoyl-[ACP] + H2O. In terms of biological role, involved in unsaturated fatty acids biosynthesis. Catalyzes the dehydration of short chain beta-hydroxyacyl-ACPs and long chain saturated and unsaturated beta-hydroxyacyl-ACPs. The chain is 3-hydroxyacyl-[acyl-carrier-protein] dehydratase FabZ from Shewanella sp. (strain MR-4).